Consider the following 197-residue polypeptide: Lipoprotein signal peptidase (197 aa).

2 consecutive transmembrane segments (helical) span residues 73-93 and 97-117; these read SNAIFLITNTLIVCYLYYLMI and TIGSFAGYSFVIGGAVGNLID. Active-site residues include D126 and D144. The helical transmembrane segment at 135–155 threads the bilayer; it reads YSFPVFNLADCFITIGVIILI.

It belongs to the peptidase A8 family.

It localises to the cell inner membrane. The catalysed reaction is Release of signal peptides from bacterial membrane prolipoproteins. Hydrolyzes -Xaa-Yaa-Zaa-|-(S,diacylglyceryl)Cys-, in which Xaa is hydrophobic (preferably Leu), and Yaa (Ala or Ser) and Zaa (Gly or Ala) have small, neutral side chains.. The protein operates within protein modification; lipoprotein biosynthesis (signal peptide cleavage). Its function is as follows. This protein specifically catalyzes the removal of signal peptides from prolipoproteins. This chain is Lipoprotein signal peptidase, found in Rickettsia felis (strain ATCC VR-1525 / URRWXCal2) (Rickettsia azadi).